The primary structure comprises 385 residues: Cytochrome b (385 aa).

At 1–27 the chain is on the mitochondrial matrix side; that stretch reads MAFRKSNVYLSLVNSYIIDSPQPSSIN. Y16 is an a ubiquinone binding site. A helical membrane pass occupies residues 28 to 51; the sequence is YWWNMGSLLGLCLVIQIVTGIFMA. Residues 52–74 are Mitochondrial intermembrane-facing; it reads MHYSSNIELAFSSVEHIMRDVHN. The chain crosses the membrane as a helical span at residues 75 to 102; the sequence is GYILRYLHANGASFFFMVMFMHMAKGLY. H82 and H96 together coordinate heme b. Residues 103–110 are Mitochondrial matrix-facing; that stretch reads YGSYRSPR. Residues 111-135 form a helical membrane-spanning segment; it reads VTLWNVGVIIFILTIATAFLGYCCV. Residues 136–172 are Mitochondrial intermembrane-facing; that stretch reads YGQMSHWGATVITNLFSAIPFVGNDIVSWLWGGFSVS. The chain crosses the membrane as a helical span at residues 173–204; it reads NPTIQRFFALHYLVPFIIAAMVIMHLMALHIH. Residues H183 and H197 each contribute to the heme b site. H202 contributes to the a ubiquinone binding site. The Mitochondrial matrix segment spans residues 205-223; that stretch reads GSSNPLGITGNLDRIPMHS. Residues 224 to 246 traverse the membrane as a helical segment; the sequence is YFIFKDLVTVFLFMLILALFVFY. Topologically, residues 247-287 are mitochondrial intermembrane; that stretch reads SPNTLGHPDNYIPGNPLVTPASIVPEWYLLPFYAILRSIPD. The helical transmembrane segment at 288–308 threads the bilayer; sequence KLLGVITMFAAILVLLVLPFT. The Mitochondrial matrix portion of the chain corresponds to 309–319; it reads DRSVVRGNTFK. Residues 320–340 form a helical membrane-spanning segment; that stretch reads VLSKFFFFIFVFNFVLLGQIG. Residues 341–347 lie on the Mitochondrial intermembrane side of the membrane; the sequence is ACHVEVP. Residues 348 to 364 traverse the membrane as a helical segment; that stretch reads YVLMGQIATFIYFAYFL. Residues 365-385 lie on the Mitochondrial matrix side of the membrane; sequence IIVPVISTIENVLFYIGRVNK.

Belongs to the cytochrome b family. Component of the ubiquinol-cytochrome c oxidoreductase (cytochrome b-c1 complex, complex III, CIII), a multisubunit enzyme composed of 10 subunits. The complex is composed of 3 respiratory subunits cytochrome b (COB), cytochrome c1 (CYT1) and Rieske protein (RIP1), 2 core protein subunits COR1 and QCR2, and 5 low-molecular weight protein subunits QCR6, QCR7, QCR8, QCR9 and QCR10. The complex exists as an obligatory dimer and forms supercomplexes (SCs) in the inner mitochondrial membrane with a monomer or a dimer of cytochrome c oxidase (complex IV, CIV), resulting in 2 different assemblies (supercomplexes III(2)IV and III(2)IV(2)). Heme b is required as a cofactor.

The protein resides in the mitochondrion inner membrane. The enzyme catalyses a quinol + 2 Fe(III)-[cytochrome c](out) = a quinone + 2 Fe(II)-[cytochrome c](out) + 2 H(+)(out). Component of the ubiquinol-cytochrome c oxidoreductase, a multisubunit transmembrane complex that is part of the mitochondrial electron transport chain which drives oxidative phosphorylation. The respiratory chain contains 3 multisubunit complexes succinate dehydrogenase (complex II, CII), ubiquinol-cytochrome c oxidoreductase (cytochrome b-c1 complex, complex III, CIII) and cytochrome c oxidase (complex IV, CIV), that cooperate to transfer electrons derived from NADH and succinate to molecular oxygen, creating an electrochemical gradient over the inner membrane that drives transmembrane transport and the ATP synthase. The cytochrome b-c1 complex catalyzes electron transfer from ubiquinol to cytochrome c, linking this redox reaction to translocation of protons across the mitochondrial inner membrane, with protons being carried across the membrane as hydrogens on the quinol. In the process called Q cycle, 2 protons are consumed from the matrix, 4 protons are released into the intermembrane space and 2 electrons are passed to cytochrome c. Cytochrome b is a catalytic core subunit containing 2 b-type hemes BL and BH topographically segregated in the quinone reduction (Qi) and quinol oxidation (Q0) sites on opposite sides of the membrane. In Saccharomyces cerevisiae (strain ATCC 204508 / S288c) (Baker's yeast), this protein is Cytochrome b (COB).